The sequence spans 120 residues: Large ribosomal subunit protein uL18 (120 aa).

The protein belongs to the universal ribosomal protein uL18 family. In terms of assembly, part of the 50S ribosomal subunit; part of the 5S rRNA/L5/L18/L25 subcomplex. Contacts the 5S and 23S rRNAs.

Functionally, this is one of the proteins that bind and probably mediate the attachment of the 5S RNA into the large ribosomal subunit, where it forms part of the central protuberance. This is Large ribosomal subunit protein uL18 from Rhodopseudomonas palustris (strain BisA53).